A 420-amino-acid polypeptide reads, in one-letter code: Cyclin-B2-1 (420 aa).

A disordered region spans residues 1–61; the sequence is MDRASENRRL…EKSGKEEQKP (61 aa). Over residues 49–60 the composition is skewed to basic and acidic residues; that stretch reads PMLEKSGKEEQK.

This sequence belongs to the cyclin family. Cyclin AB subfamily. As to quaternary structure, interacts with CDKB2-1. As to expression, expressed in the root apices.

Its function is as follows. Involved in the control of the cell cycle at the G2/M (mitosis) transition. May activate CDKB2-1 kinase. This Oryza sativa subsp. japonica (Rice) protein is Cyclin-B2-1 (CYCB2-1).